A 118-amino-acid polypeptide reads, in one-letter code: Elongin-B (118 aa).

Met-1 is subject to N-acetylmethionine. The 66-residue stretch at 1-66 (MDVFLMIRRH…LGECGFTSQT (66 aa)) folds into the Ubiquitin-like domain. Thr-84 carries the phosphothreonine modification. The interval 92–118 (PFSSPPELPDVMKPQDSGSSANEQAVQ) is disordered. Over residues 107–118 (DSGSSANEQAVQ) the composition is skewed to polar residues. Phosphoserine occurs at positions 108 and 111.

Belongs to the Elongin B family. Heterotrimer of an A (ELOA, ELOA2 or ELOA3P), ELOB and ELOC subunit. The elongin BC complex interacts with EPOP; leading to recruit the elongin BC complex to Polycomb group (PcG) target genes, thereby restricting excessive activity of the PRC2/EED-EZH2 complex. Component of multiple cullin-RING E3 ubiquitin-protein ligase complexes composed of Elongin BC (ELOB and ELOC), a cullin (either CUL2 or CUL5), a catalytic subunit (either RBX1 or RNF7/RBX2), as well as a substrate adapter protein that can be either ASB2, ASB9, ASB11, KLHDC2, KLHDC3, KLHDC10, APPBP2, FEM1A, FEM1B, FEM1C, LRR1, PCMTD1, SOCS1, SOCS2, SOCS5, SPSB1, SPSB3, ELOA, VHL, WSB1 or RAB40C. As part of the Elongin BC E3 ubiquitin ligase complex; interacts with NRBP1. May also interact with DCUN1D1, DCUN1D2, DCUN1D3 and DCUN1D5. May form oligomers as a KLHDC2/KLHDC3-ELOB-ELOC complex; this interaction is autoinhibitory for the E3 ligase complex as the substrate-binding site of KLHDC2/KLHDC3 is blocked in the oligomer. As to quaternary structure, (Microbial infection) Following infection by HIV-1 virus, component of a cullin-5-RING E3 ubiquitin-protein ligase complex (ECS complex) hijacked by the HIV-1 Vif protein. In terms of assembly, (Microbial infection) Substrate adapter protein can be a viral protein such as HIV Vif. (Microbial infection) Interacts with molluscum contagiosum virus MC132. As to quaternary structure, (Microbial infection) Interacts with herpes virus 8 virus protein LANA1.

The protein resides in the nucleus. Its pathway is protein modification; protein ubiquitination. SIII, also known as elongin, is a general transcription elongation factor that increases the RNA polymerase II transcription elongation past template-encoded arresting sites. Subunit A is transcriptionally active and its transcription activity is strongly enhanced by binding to the dimeric complex of the SIII regulatory subunits B and C (elongin BC complex). In embryonic stem cells, the elongin BC complex is recruited by EPOP to Polycomb group (PcG) target genes in order generate genomic region that display both active and repressive chromatin properties, an important feature of pluripotent stem cells. In terms of biological role, core component of multiple cullin-2 and cullin-5-RING E3 ubiquitin-protein ligase complexes (ECS complexes), which mediate the ubiquitination of target proteins. By binding to BC-box motifs it seems to link target recruitment subunits, like VHL and members of the SOCS box family, to Cullin/RBX1 modules that activate E2 ubiquitination enzymes. Component the von Hippel-Lindau ubiquitination complex CBC(VHL). A number of ECS complexes (containing either KLHDC2, KLHDC3, KLHDC10, APPBP2, FEM1A, FEM1B or FEM1C as substrate-recognition component) are part of the DesCEND (destruction via C-end degrons) pathway, which recognizes a C-degron located at the extreme C terminus of target proteins, leading to their ubiquitination and degradation. The ECS(ASB9) complex mediates ubiquitination and degradation of CKB. As part of a multisubunit ubiquitin ligase complex, polyubiquitinates monoubiquitinated POLR2A. ECS(LRR1) ubiquitinates MCM7 and promotes CMG replisome disassembly by VCP and chromatin extraction during S-phase. As part of the ECS(RAB40C) complex, mediates ANKRD28 ubiquitination and degradation, thereby inhibiting protein phosphatase 6 (PP6) complex activity and focal adhesion assembly during cell migration. Functionally, (Microbial infection) Following infection by HIV-1 virus, component of a cullin-5-RING E3 ubiquitin-protein ligase complex (ECS complex) hijacked by the HIV-1 Vif protein, which catalyzes ubiquitination and degradation of APOBEC3F and APOBEC3G. The complex can also ubiquitinate APOBEC3H to some extent. In Homo sapiens (Human), this protein is Elongin-B.